The primary structure comprises 62 residues: Sperm protamine P1 (62 aa).

Residues 1-46 (MARCRRHSRSRSRSRNQCQRRRRRHYNRRRTYRRSRRHSRRRRVRR) form a disordered region.

It belongs to the protamine P1 family. In terms of tissue distribution, testis.

Its subcellular location is the nucleus. It is found in the chromosome. Its function is as follows. Protamines substitute for histones in the chromatin of sperm during the haploid phase of spermatogenesis. They compact sperm DNA into a highly condensed, stable and inactive complex. The polypeptide is Sperm protamine P1 (PRM1) (Planigale gilesi (Flat-skulled marsupial mouse)).